We begin with the raw amino-acid sequence, 407 residues long: MSADSADSVPSPRSAFATTLQIVSVVSFTFICYLTIGLPLAVLPGFVHDELGFSAIVAGAAISVQYFATLASRPLAGRCADTLGPKRTVLRGLAACGASGALLLSAFAFARWPAASIVLLVASRLVLGIGESLVGTGAILWGIGRVGTAHNARVISWNGIATYGALAIGAPVGVAISHALIPAVLGMLVIALAALGYYLARLITPVPLVHGERMSYASVLTRVLPHGLGLALGSAGFGSIATFITLYYAARHWPNAALSLTVFGTLFIGARLLFANTIKTHGGFRVAIVSFAFECAGLLMLWLAPVPHVALVGAALTGFGFALIFPALGVEAVALVPPASRGAALSAYSVFLDLSLGITGPLAGYVAGAFGYPQVFLCAAVAAAAGVALSTVLYQRQARLSGSGAAA.

Transmembrane regions (helical) follow at residues 22–42, 51–71, 101–121, 126–146, 154–174, 179–199, 227–247, 258–278, 286–306, 309–329, 347–367, and 369–389; these read IVSVVSFTFICYLTIGLPLAV, LGFSAIVAGAAISVQYFATLA, ALLLSAFAFARWPAASIVLLV, VLGIGESLVGTGAILWGIGRV, VISWNGIATYGALAIGAPVGV, ALIPAVLGMLVIALAALGYYL, GLGLALGSAGFGSIATFITLY, LSLTVFGTLFIGARLLFANTI, VAIVSFAFECAGLLMLWLAPV, VALVGAALTGFGFALIFPALG, AYSVFLDLSLGITGPLAGYVA, and AFGYPQVFLCAAVAAAAGVAL.

This sequence belongs to the major facilitator superfamily. YhhS family.

The protein resides in the cell inner membrane. This is an uncharacterized protein from Burkholderia pseudomallei (strain 1106a).